Here is a 395-residue protein sequence, read N- to C-terminus: Long-chain-alcohol dehydrogenase 1 (395 aa).

Residues 98–102 (GSALD) and 141–144 (TTSG) each bind NAD(+).

It belongs to the iron-containing alcohol dehydrogenase family. Homooctamer.

The catalysed reaction is glycerol + NAD(+) = dihydroxyacetone + NADH + H(+). The enzyme catalyses a long-chain primary fatty alcohol + 2 NAD(+) + H2O = a long-chain fatty acid + 2 NADH + 3 H(+). In terms of biological role, long-chain alkyl alcohol dehydrogenase that can oxidize a broad range of alkyl alcohols from ethanol to 1-triacontanol (C2 to C30) as well as 1,3-propanediol and acetaldehyde. The best substrate is ethanol. Also oxidizes glycerol. This is Long-chain-alcohol dehydrogenase 1 (adh1) from Geobacillus thermodenitrificans (strain NG80-2).